We begin with the raw amino-acid sequence, 344 residues long: N-acetyl-gamma-glutamyl-phosphate reductase (344 aa).

Residue cysteine 150 is part of the active site.

Belongs to the NAGSA dehydrogenase family. Type 1 subfamily.

The protein localises to the cytoplasm. The enzyme catalyses N-acetyl-L-glutamate 5-semialdehyde + phosphate + NADP(+) = N-acetyl-L-glutamyl 5-phosphate + NADPH + H(+). Its pathway is amino-acid biosynthesis; L-arginine biosynthesis; N(2)-acetyl-L-ornithine from L-glutamate: step 3/4. Catalyzes the NADPH-dependent reduction of N-acetyl-5-glutamyl phosphate to yield N-acetyl-L-glutamate 5-semialdehyde. In Azotobacter vinelandii (strain DJ / ATCC BAA-1303), this protein is N-acetyl-gamma-glutamyl-phosphate reductase.